We begin with the raw amino-acid sequence, 228 residues long: UPF0328 protein ECU07_0040 (228 aa).

The protein belongs to the UPF0328 family.

This chain is UPF0328 protein ECU07_0040, found in Encephalitozoon cuniculi (strain GB-M1) (Microsporidian parasite).